The following is a 485-amino-acid chain: NADH-quinone oxidoreductase subunit N (485 aa).

The next 14 helical transmembrane spans lie at 8–28 (LIALLPLLIVGLTVVVVMLSI), 35–55 (FLNATLSVIGLNAALVSLWFV), 71–91 (GFAMLYTGLVLLASLATCTFA), 105–125 (FYLLVLIAALGGILLANANHL), 127–147 (SLFLGIELISLPLFGLVGYAF), 159–179 (YTILSAAASSFLLFGMALVYA), 203–223 (LLAGFGMMIVGLGFKLSLVPF), 235–255 (PAPVSTFLATASKIAIFGVVM), 271–291 (VVLAIIAFASIIFGNLMALSQ), 297–317 (LLGYSSISHLGYLLVALIALQ), 326–346 (VGGYLAGYLFSSLGAFGVVSL), 373–393 (AAVMTVMMLSLAGIPMTLGFI), 408–430 (WWLVGAVVVGSAIGLYYYLRVAV), and 455–475 (IVVLISALLVLVLGVWPQPLI).

Belongs to the complex I subunit 2 family. NDH-1 is composed of 13 different subunits. Subunits NuoA, H, J, K, L, M, N constitute the membrane sector of the complex.

The protein localises to the cell inner membrane. It catalyses the reaction a quinone + NADH + 5 H(+)(in) = a quinol + NAD(+) + 4 H(+)(out). Functionally, NDH-1 shuttles electrons from NADH, via FMN and iron-sulfur (Fe-S) centers, to quinones in the respiratory chain. The immediate electron acceptor for the enzyme in this species is believed to be ubiquinone. Couples the redox reaction to proton translocation (for every two electrons transferred, four hydrogen ions are translocated across the cytoplasmic membrane), and thus conserves the redox energy in a proton gradient. In Shigella boydii serotype 18 (strain CDC 3083-94 / BS512), this protein is NADH-quinone oxidoreductase subunit N.